A 109-amino-acid chain; its full sequence is T cell receptor alpha variable 25 (109 aa).

Positions 1–19 (MLLITSMLVLWMQLSQVNG) are cleaved as a signal peptide. The region spanning 20–109 (QQVMQIPQYQ…TDVGTYFCAG (90 aa)) is the Ig-like domain. C41 and C107 are joined by a disulfide. N42 and N89 each carry an N-linked (GlcNAc...) asparagine glycan.

As to quaternary structure, alpha-beta TR is a heterodimer composed of an alpha and beta chain; disulfide-linked. The alpha-beta TR is associated with the transmembrane signaling CD3 coreceptor proteins to form the TR-CD3 (TcR or TCR). The assembly of alpha-beta TR heterodimers with CD3 occurs in the endoplasmic reticulum where a single alpha-beta TR heterodimer associates with one CD3D-CD3E heterodimer, one CD3G-CD3E heterodimer and one CD247 homodimer forming a stable octameric structure. CD3D-CD3E and CD3G-CD3E heterodimers preferentially associate with TR alpha and TR beta chains, respectively. The association of the CD247 homodimer is the last step of TcR assembly in the endoplasmic reticulum and is required for transport to the cell surface.

It is found in the cell membrane. Functionally, v region of the variable domain of T cell receptor (TR) alpha chain that participates in the antigen recognition. Alpha-beta T cell receptors are antigen specific receptors which are essential to the immune response and are present on the cell surface of T lymphocytes. Recognize peptide-major histocompatibility (MH) (pMH) complexes that are displayed by antigen presenting cells (APC), a prerequisite for efficient T cell adaptive immunity against pathogens. Binding of alpha-beta TR to pMH complex initiates TR-CD3 clustering on the cell surface and intracellular activation of LCK that phosphorylates the ITAM motifs of CD3G, CD3D, CD3E and CD247 enabling the recruitment of ZAP70. In turn ZAP70 phosphorylates LAT, which recruits numerous signaling molecules to form the LAT signalosome. The LAT signalosome propagates signal branching to three major signaling pathways, the calcium, the mitogen-activated protein kinase (MAPK) kinase and the nuclear factor NF-kappa-B (NF-kB) pathways, leading to the mobilization of transcription factors that are critical for gene expression and essential for T cell growth and differentiation. The T cell repertoire is generated in the thymus, by V-(D)-J rearrangement. This repertoire is then shaped by intrathymic selection events to generate a peripheral T cell pool of self-MH restricted, non-autoaggressive T cells. Post-thymic interaction of alpha-beta TR with the pMH complexes shapes TR structural and functional avidity. The chain is T cell receptor alpha variable 25 from Homo sapiens (Human).